We begin with the raw amino-acid sequence, 142 residues long: Large ribosomal subunit protein uL13 (142 aa).

The protein belongs to the universal ribosomal protein uL13 family. As to quaternary structure, part of the 50S ribosomal subunit.

Functionally, this protein is one of the early assembly proteins of the 50S ribosomal subunit, although it is not seen to bind rRNA by itself. It is important during the early stages of 50S assembly. This chain is Large ribosomal subunit protein uL13, found in Xylella fastidiosa (strain M23).